Here is a 292-residue protein sequence, read N- to C-terminus: S-methyl-5'-thioadenosine phosphorylase (292 aa).

Phosphate-binding positions include Ser-11, Arg-53 to His-54, and Ser-86 to Ala-87. Met-184 provides a ligand contact to substrate. Position 185 (Thr-185) interacts with phosphate. Residue Asp-208–Asp-210 participates in substrate binding.

It belongs to the PNP/MTAP phosphorylase family. MTAP subfamily. Homohexamer. Dimer of a homotrimer.

It carries out the reaction S-methyl-5'-thioadenosine + phosphate = 5-(methylsulfanyl)-alpha-D-ribose 1-phosphate + adenine. It functions in the pathway amino-acid biosynthesis; L-methionine biosynthesis via salvage pathway; S-methyl-5-thio-alpha-D-ribose 1-phosphate from S-methyl-5'-thioadenosine (phosphorylase route): step 1/1. Its function is as follows. Catalyzes the reversible phosphorylation of S-methyl-5'-thioadenosine (MTA) to adenine and 5-methylthioribose-1-phosphate. Involved in the breakdown of MTA, a major by-product of polyamine biosynthesis. Responsible for the first step in the methionine salvage pathway after MTA has been generated from S-adenosylmethionine. Has broad substrate specificity with 6-aminopurine nucleosides as preferred substrates. In Koribacter versatilis (strain Ellin345), this protein is S-methyl-5'-thioadenosine phosphorylase.